The sequence spans 247 residues: Phosphoribosylaminoimidazole-succinocarboxamide synthase (247 aa).

Belongs to the SAICAR synthetase family.

The enzyme catalyses 5-amino-1-(5-phospho-D-ribosyl)imidazole-4-carboxylate + L-aspartate + ATP = (2S)-2-[5-amino-1-(5-phospho-beta-D-ribosyl)imidazole-4-carboxamido]succinate + ADP + phosphate + 2 H(+). It functions in the pathway purine metabolism; IMP biosynthesis via de novo pathway; 5-amino-1-(5-phospho-D-ribosyl)imidazole-4-carboxamide from 5-amino-1-(5-phospho-D-ribosyl)imidazole-4-carboxylate: step 1/2. This is Phosphoribosylaminoimidazole-succinocarboxamide synthase from Gloeobacter violaceus (strain ATCC 29082 / PCC 7421).